The sequence spans 289 residues: Glycine--tRNA ligase alpha subunit (289 aa).

Belongs to the class-II aminoacyl-tRNA synthetase family. Tetramer of two alpha and two beta subunits.

The protein localises to the cytoplasm. It catalyses the reaction tRNA(Gly) + glycine + ATP = glycyl-tRNA(Gly) + AMP + diphosphate. This Rickettsia bellii (strain OSU 85-389) protein is Glycine--tRNA ligase alpha subunit.